Here is a 1124-residue protein sequence, read N- to C-terminus: EGF and laminin G domain-containing protein (1124 aa).

Over 1-1055 (RTFVKKYSAS…KLQAEDDDKT (1055 aa)) the chain is Extracellular. 2 Laminin G-like domains span residues 8–203 (SASR…NQKC) and 210–369 (PFTF…WSGC). 9 cysteine pairs are disulfide-bonded: Cys-167–Cys-203, Cys-342–Cys-369, Cys-375–Cys-386, Cys-380–Cys-395, Cys-397–Cys-412, Cys-761–Cys-788, Cys-792–Cys-803, Cys-797–Cys-812, and Cys-814–Cys-824. In terms of domain architecture, EGF-like 1 spans 371 to 413 (ITDFCIFSPCLHGGECTQTGKTFSCGCSGTGYDKGPNSLSVCQ). A Laminin G-like 3 domain is found at 621–788 (NTATFVNEDG…GEAVFVKSGC (168 aa)). Residues 789-825 (GAACENNSCKNHAKCLDNYNVYFCDCSKTPYYGYFCH) enclose the EGF-like 2 domain. The interval 1011–1047 (RATCGPEPKVPEIPTPRPVGQRADVSTPQGITTNPKL) is disordered. Polar residues predominate over residues 1034–1046 (DVSTPQGITTNPK). A helical transmembrane segment spans residues 1056-1076 (AIIVVVVLILVLLLVVLILVI). At 1077-1124 (YWYWARHKGEYHTHEDDEELKATDPYIEPAAPRKLKGEEPEKKKEWYI) the chain is on the cytoplasmic side. The segment at 1090 to 1124 (HEDDEELKATDPYIEPAAPRKLKGEEPEKKKEWYI) is disordered. A compositionally biased stretch (basic and acidic residues) spans 1111 to 1124 (LKGEEPEKKKEWYI).

Component of the acid-insoluble organic matrix of the aragonitic skeleton (at protein level).

It is found in the membrane. The chain is EGF and laminin G domain-containing protein from Acropora millepora (Staghorn coral).